The primary structure comprises 650 residues: Chaperone protein DnaK (650 aa).

The residue at position 200 (Thr-200) is a Phosphothreonine; by autocatalysis. The span at 611–636 shows a compositional bias: low complexity; that stretch reads AQQAGAAGAAGAAEGAAHAGGAQQAA. The segment at 611–637 is disordered; that stretch reads AQQAGAAGAAGAAEGAAHAGGAQQAAD.

This sequence belongs to the heat shock protein 70 family.

Functionally, acts as a chaperone. The sequence is that of Chaperone protein DnaK from Burkholderia ambifaria (strain MC40-6).